The chain runs to 491 residues: Cell division control protein 1 (491 aa).

A disordered region spans residues 1 to 33 (MVYRNRSKSVLSTHSKKSDDKAHYKSRSKKKSK). Residues 1–39 (MVYRNRSKSVLSTHSKKSDDKAHYKSRSKKKSKSRSKKR) are Cytoplasmic-facing. Over residues 24-33 (YKSRSKKKSK) the composition is skewed to basic residues. The helical transmembrane segment at 40-60 (LRIYWRYISIVWILWLGLISY) threads the bilayer. Residues 61–391 (YESVVVKRAM…LCYMPDPYKA (331 aa)) are Extracellular-facing. The a divalent metal cation site is built by D95, D144, N183, and H323. Residues 392–412 (IRMYLWGLLFSAAFIAYMHFF) traverse the membrane as a helical segment. Topologically, residues 413 to 465 (PKSFNNRVATIMNRVFTRPDGNTSDLPLPTSISKSKSKKSLTHSKYAVNDTRS) are cytoplasmic. A helical transmembrane segment spans residues 466–486 (IKQFLVNAIVLFVSVMPIFIY). Over 487-491 (FYTVV) the chain is Extracellular.

Belongs to the metallophosphoesterase superfamily. MPPE1 family. It depends on a divalent metal cation as a cofactor.

The protein resides in the membrane. Functionally, probable metallophosphoesterase which may participate in recombinational repair of double -strand breaks. The protein is Cell division control protein 1 (CDC1) of Saccharomyces cerevisiae (strain ATCC 204508 / S288c) (Baker's yeast).